The following is a 428-amino-acid chain: ETS domain-containing protein Elk-1 (428 aa).

The segment at residues 5-86 is a DNA-binding region (ETS); that stretch reads VTLWQFLLQL…SGQKFVYKFV (82 aa). 3 disordered regions span residues 121–149, 165–205, and 228–358; these read AAPGDTVSGKPGTPKGAGMAGPGGLARSS, QSLQ…SPLE, and NLKS…SLLP. Over residues 177 to 205 the composition is skewed to low complexity; it reads PAVVLPSAAPAGAAAPPSGSRSTSPSPLE. Residues Lys230, Lys249, and Lys254 each participate in a glycyl lysine isopeptide (Lys-Gly) (interchain with G-Cter in SUMO) cross-link. Residues 248-261 are compositionally biased toward basic and acidic residues; it reads VKVEGPKEELEVAG. The residue at position 324 (Ser324) is a Phosphoserine; by MAPK1. Thr336, Thr353, Thr363, and Thr368 each carry phosphothreonine; by MAPK1. Residues 349 to 399 are sufficient for interaction with MAD2L2; sequence GPALTPSLLPTHTLTPVLLTPSSLPPSIHFWSTLSPIAPRSPAKLSFQFPS. Residue Thr381 is glycosylated (O-linked (GlcNAc) threonine). At Ser383 the chain carries Phosphoserine; by MAPK1 and MAPK8. At Ser389 the chain carries Phosphoserine; by MAPK1. A Phosphothreonine; by MAPK1 modification is found at Thr417. Ser422 carries the post-translational modification Phosphoserine; by MAPK1.

This sequence belongs to the ETS family. Interacts in its sumoylated form with PIAS2/PIASX which enhances its transcriptional activator activity. Interacts with MAD2L2; the interaction is direct and promotes phosphorylation by the kinases MAPK8 and/or MAPK9. Interacts with POU1F1. In terms of processing, sumoylation represses transcriptional activator activity as it results in recruitment of HDAC2 to target gene promoters which leads to decreased histone acetylation and reduced transactivator activity. It also regulates nuclear retention. On mitogenic stimulation, phosphorylated on C-terminal serine and threonine residues by MAPK1. Ser-383 and Ser-389 are the preferred sites for MAPK1. In vitro, phosphorylation by MAPK1 potentiates ternary complex formation with the serum responses factors, SRE and SRF. Also phosphorylated on Ser-383 by MAPK8 and/or MAKP9. Phosphorylation leads to loss of sumoylation and restores transcriptional activator activity. Phosphorylated and activated by CAMK4, MAPK11, MAPK12 and MAPK14. Upon bFGF stimulus, phosphorylated by PAK1. Phosphorylated by PRP4K at Thr-417; phosphorylation activation ELK1 transcriptional activity. Lung and testis.

It is found in the nucleus. In terms of biological role, transcription factor that binds to purine-rich DNA sequences. Forms a ternary complex with SRF and the ETS and SRF motifs of the serum response element (SRE) on the promoter region of immediate early genes such as FOS and IER2. Induces target gene transcription upon JNK and MAPK-signaling pathways stimulation. The protein is ETS domain-containing protein Elk-1 of Homo sapiens (Human).